Here is a 537-residue protein sequence, read N- to C-terminus: Mitochondria-eating protein (537 aa).

Positions 1 to 270 are interaction with YWHAG/14-3-3 protein gamma; the sequence is MAESLKKLAK…SHSRSRSHSR (270 aa). 6 positions are modified to phosphoserine: Ser13, Ser85, Ser123, Ser127, Ser154, and Ser157. A disordered region spans residues 109-150; the sequence is SKNRDNSPDQDQHQSDNESFSETQPTQVQDDLAESGKSLEGA. Basic and acidic residues predominate over residues 110–124; that stretch reads KNRDNSPDQDQHQSD. The span at 125–137 shows a compositional bias: polar residues; that stretch reads NESFSETQPTQVQ. 2 coiled-coil regions span residues 152 to 184 and 210 to 243; these read NGST…ARHK and QDVV…RSAR. 2 disordered regions span residues 171 to 212 and 233 to 291; these read QLKS…PQDV and EKSG…RAKM. Basic and acidic residues predominate over residues 179–209; sequence EDARHKTSENRRSEALKSDHRSTKRTQDQRP. Positions 239–251 are enriched in low complexity; that stretch reads GRSARSPSPSTGT. Residues 252-269 show a composition bias toward basic residues; that stretch reads RSHRRGRSRSHSRSRSHS. 3 positions are modified to phosphoserine: Ser283, Ser285, and Ser508.

This sequence belongs to the MIEAP family. In terms of assembly, interacts (via coiled-coil domains) with BNIP3L (via BH3 domain). Interacts (via coiled-coil domains) with BNIP3 (via BH3 domain). Interacts with YWHAG/14-3-3 protein gamma; a protein that also plays a role in MALM. As to expression, in testis, expressed primarily in spermatids.

The protein resides in the cytoplasm. It is found in the cytosol. It localises to the mitochondrion outer membrane. Its subcellular location is the mitochondrion matrix. In terms of biological role, key regulator of mitochondrial quality that mediates the repairing or degradation of unhealthy mitochondria in response to mitochondrial damage. Mediator of mitochondrial protein catabolic process (also named MALM) by mediating the degradation of damaged proteins inside mitochondria by promoting the accumulation in the mitochondrial matrix of hydrolases that are characteristic of the lysosomal lumen. Also involved in mitochondrion degradation of damaged mitochondria by promoting the formation of vacuole-like structures (named MIV), which engulf and degrade unhealthy mitochondria by accumulating lysosomes. The physical interaction of SPATA18/MIEAP, BNIP3 and BNIP3L/NIX at the mitochondrial outer membrane regulates the opening of a pore in the mitochondrial double membrane in order to mediate the translocation of lysosomal proteins from the cytoplasm to the mitochondrial matrix. Binds cardiolipin. May form molecular condensates (non-membrane-bounded organelles) within mitochondria that compartmentalize and promote cardiolipin metabolism. This chain is Mitochondria-eating protein (Spata18), found in Mus musculus (Mouse).